We begin with the raw amino-acid sequence, 370 residues long: Putative phosphoserine aminotransferase (370 aa).

Positions 1-22 are disordered; that stretch reads MAELTIPADLKPRDGRFGSGPS. Arg44 serves as a coordination point for L-glutamate. 4 residues coordinate pyridoxal 5'-phosphate: Phe102, Thr148, Asp170, and Gln193. N6-(pyridoxal phosphate)lysine is present on Lys194. 245 to 246 contacts pyridoxal 5'-phosphate; that stretch reads NT.

This sequence belongs to the class-V pyridoxal-phosphate-dependent aminotransferase family. SerC subfamily. Homodimer. The cofactor is pyridoxal 5'-phosphate.

It localises to the cytoplasm. The catalysed reaction is O-phospho-L-serine + 2-oxoglutarate = 3-phosphooxypyruvate + L-glutamate. The enzyme catalyses 4-(phosphooxy)-L-threonine + 2-oxoglutarate = (R)-3-hydroxy-2-oxo-4-phosphooxybutanoate + L-glutamate. The protein operates within amino-acid biosynthesis; L-serine biosynthesis; L-serine from 3-phospho-D-glycerate: step 2/3. It functions in the pathway cofactor biosynthesis; pyridoxine 5'-phosphate biosynthesis; pyridoxine 5'-phosphate from D-erythrose 4-phosphate: step 3/5. Functionally, catalyzes the reversible conversion of 3-phosphohydroxypyruvate to phosphoserine and of 3-hydroxy-2-oxo-4-phosphonooxybutanoate to phosphohydroxythreonine. This Mycobacterium sp. (strain JLS) protein is Putative phosphoserine aminotransferase.